We begin with the raw amino-acid sequence, 101 residues long: uncharacterized protein (101 aa).

Its function is as follows. May regulate the expression of phage structural components with protein P13. This is an uncharacterized protein from Pseudoalteromonas phage PM2 (Bacteriophage PM2).